Here is a 138-residue protein sequence, read N- to C-terminus: Large ribosomal subunit protein uL16 (138 aa).

The span at 1 to 13 (MLQPSRRKYRKEQ) shows a compositional bias: basic residues. The disordered stretch occupies residues 1-22 (MLQPSRRKYRKEQKGRNTGLAT).

Belongs to the universal ribosomal protein uL16 family. As to quaternary structure, part of the 50S ribosomal subunit.

Functionally, binds 23S rRNA and is also seen to make contacts with the A and possibly P site tRNAs. The sequence is that of Large ribosomal subunit protein uL16 from Bordetella petrii (strain ATCC BAA-461 / DSM 12804 / CCUG 43448).